The following is a 781-amino-acid chain: Probable serine/threonine-protein kinase C70.05c (781 aa).

Disordered stretches follow at residues 1 to 315 (MPSD…PLVS) and 368 to 417 (YSGK…TNIS). Over residues 21–31 (ESPSSRSIGSG) the composition is skewed to low complexity. Residues 43 to 63 (FKNSFLSRKNSSQIKSPSDYK) show a composition bias toward polar residues. A compositionally biased stretch (basic and acidic residues) spans 64 to 73 (SSAHEQRVNH). Over residues 74–92 (TTDSMAHVPGNNSPLQTPQ) the composition is skewed to polar residues. A Phosphoserine modification is found at serine 94. Over residues 112–121 (SRHHKPHHSG) the composition is skewed to basic residues. 3 stretches are compositionally biased toward polar residues: residues 136 to 146 (SNANSPTSESP), 161 to 195 (KNTS…PNSR), and 206 to 228 (NSAS…SLSR). Serine 253 carries the phosphoserine modification. The span at 272-304 (PLTASPTPSSPTGTPNSMSKSPSLSSLASTGAS) shows a compositional bias: low complexity. Positions 379–406 (NVGSSANTAPNSPTSANSSEGNQGNGPT) are enriched in polar residues. One can recognise a Protein kinase domain in the interval 432–742 (AKRVVPRLSA…AQEALNLPFV (311 aa)). ATP is bound by residues 452-460 (MGSGATAVI) and lysine 480. The active-site Proton acceptor is the aspartate 584.

The protein belongs to the protein kinase superfamily. Ser/Thr protein kinase family.

It is found in the cytoplasm. The enzyme catalyses L-seryl-[protein] + ATP = O-phospho-L-seryl-[protein] + ADP + H(+). It carries out the reaction L-threonyl-[protein] + ATP = O-phospho-L-threonyl-[protein] + ADP + H(+). The sequence is that of Probable serine/threonine-protein kinase C70.05c from Schizosaccharomyces pombe (strain 972 / ATCC 24843) (Fission yeast).